We begin with the raw amino-acid sequence, 505 residues long: Catalase (505 aa).

Residues 1-25 are disordered; that stretch reads MSKQDGKLTGLFGAPVSDRENSMTA. Residues His-56 and Asn-129 contribute to the active site. Tyr-339 contacts heme.

Belongs to the catalase family. Homodimer. Heme is required as a cofactor.

It catalyses the reaction 2 H2O2 = O2 + 2 H2O. Decomposes hydrogen peroxide into water and oxygen; serves to protect cells from the toxic effects of hydrogen peroxide. The sequence is that of Catalase (katA) from Staphylococcus warneri.